Here is a 461-residue protein sequence, read N- to C-terminus: Carbamoyl phosphate synthase arginine-specific small chain (461 aa).

Positions 240–427 (HVALIDCGVK…LENVQMYKDN (188 aa)) constitute a Glutamine amidotransferase type-1 domain. Catalysis depends on C316, which acts as the Nucleophile. Residues H400 and E402 contribute to the active site.

This sequence belongs to the CarA family. As to quaternary structure, heterodimer composed of 2 chains; the small (or glutamine) chain promotes the hydrolysis of glutamine to ammonia, which is used by the large (or ammonia) chain to synthesize carbamoyl phosphate.

It localises to the cytoplasm. It carries out the reaction hydrogencarbonate + L-glutamine + 2 ATP + H2O = carbamoyl phosphate + L-glutamate + 2 ADP + phosphate + 2 H(+). The enzyme catalyses L-glutamine + H2O = L-glutamate + NH4(+). It functions in the pathway amino-acid biosynthesis; L-arginine biosynthesis; carbamoyl phosphate from bicarbonate: step 1/1. Functionally, small subunit of the arginine-specific carbamoyl phosphate synthase (CPSase). CPSase catalyzes the formation of carbamoyl phosphate from the ammonia moiety of glutamine, carbonate, and phosphate donated by ATP, constituting the first step of 2 biosynthetic pathways, one leading to arginine and/or urea and the other to pyrimidine nucleotides. The small subunit (glutamine amidotransferase) binds and cleaves glutamine to supply the large subunit with the substrate ammonia. The chain is Carbamoyl phosphate synthase arginine-specific small chain (CPA1) from Chaetomium globosum (strain ATCC 6205 / CBS 148.51 / DSM 1962 / NBRC 6347 / NRRL 1970) (Soil fungus).